A 187-amino-acid polypeptide reads, in one-letter code: Pyridoxal 5'-phosphate synthase subunit PdxT (187 aa).

47–49 contacts L-glutamine; it reads GES. Cys76 serves as the catalytic Nucleophile. Residues Arg102 and 128-129 each bind L-glutamine; that span reads IR. Residues His165 and Glu167 each act as charge relay system in the active site.

Belongs to the glutaminase PdxT/SNO family. As to quaternary structure, in the presence of PdxS, forms a dodecamer of heterodimers. Only shows activity in the heterodimer.

It catalyses the reaction aldehydo-D-ribose 5-phosphate + D-glyceraldehyde 3-phosphate + L-glutamine = pyridoxal 5'-phosphate + L-glutamate + phosphate + 3 H2O + H(+). The enzyme catalyses L-glutamine + H2O = L-glutamate + NH4(+). Its pathway is cofactor biosynthesis; pyridoxal 5'-phosphate biosynthesis. In terms of biological role, catalyzes the hydrolysis of glutamine to glutamate and ammonia as part of the biosynthesis of pyridoxal 5'-phosphate. The resulting ammonia molecule is channeled to the active site of PdxS. The polypeptide is Pyridoxal 5'-phosphate synthase subunit PdxT (Methanococcus maripaludis (strain DSM 14266 / JCM 13030 / NBRC 101832 / S2 / LL)).